The following is an 86-amino-acid chain: MTRFVLFISCFFLIGMIVECKDGYLMEYGGCKMSCLMKKGTFCAEECTRMKGKDGYCYAWLACYCYNMPDWVKIWNRATNKCGKRK.

Residues M1–C20 form the signal peptide. An LCN-type CS-alpha/beta domain is found at K21 to G83. 4 cysteine pairs are disulfide-bonded: C31/C82, C35/C57, C43/C63, and C47/C65. C82 is subject to Cysteine amide.

It belongs to the long (4 C-C) scorpion toxin superfamily. Sodium channel inhibitor family. Beta subfamily. In terms of tissue distribution, expressed by the venom gland.

Its subcellular location is the secreted. In terms of biological role, beta toxins bind voltage-independently at site-4 of sodium channels (Nav) and shift the voltage of activation toward more negative potentials thereby affecting sodium channel activation and promoting spontaneous and repetitive firing. This toxin shows moderate inhibition of Nav1.1/SCN1A, Nav1.2/SCN2A, and Nav1.4/SCN4A, and promotes a left voltage shift on these channels. It exhibits similar potency on Nav1.2/SCN2A and Nav1.4/SCN4A (40-50% peak current inhibition at 0.5 uM), and weaker inhibition on Nav1.2 (20-30% peak current inhibition at 0.5 uM). The chain is Beta-toxin To4 from Tityus obscurus (Amazonian scorpion).